Consider the following 304-residue polypeptide: MGRAEAGTPKAISNALKSKGLQRLRWYCSACQKQMRDENGFKCHTQSEGHIRQMNVIAMNPGKRIQDFSNQFLRDFISLLRTAHGEKKIHFNQFYQEYIRDKNHVHMNATRWHTLSEFCKFLGRQGMCRVEENEKGFFISYIDKNPANILRNEANKKRERQEKSDEEQRLRLLDEQIKRAYESAQNNEDNKDGSSREQPVLHEIDLSKKGNPIQLNLSSSSDSHSAQNEFFQTRNTPTFSFSSSSSQTSLKHKPKNVFAELNKSRKKNNKDSLDQGQNVKRPRSAVEDIIAQETMREKRRNIKL.

The C2H2-type zinc finger occupies W26–H50. Disordered stretches follow at residues I204–N228 and L261–A291.

This sequence belongs to the KIN17 family.

The protein localises to the nucleus. The protein resides in the nucleolus. This chain is KIN17-like protein, found in Schizosaccharomyces pombe (strain 972 / ATCC 24843) (Fission yeast).